We begin with the raw amino-acid sequence, 1154 residues long: MACPWKFLFRAKFHQYGMKEEKDINNNVEKPPGATPSPSTQDDLKNHKHHNDSPQPLTETVQKLPESLDKLHATPLSRPQHVRIKNWGNGMTFQDTLHHKAKGDLACKSKSCLGAIMNPKSLTREPRDKPTPPDELLPQAIEFVNQYYSSFKEAKIEEHLARVEAVTKEIETTGTYQLTGDELIFATKQAWRNAPRCIGRIQWSNLQVFDARSCSTAKEMFEHICRHLRYASNNGNIRSAITVFPQRTDGKHDFRVWNAQLIRYAGYQMPDGTILGDPASVEFTQLCIDLGWKPKYGRFDVVPLVLQADGQDPEFFEIPPDLVLEVPMEHPKYEWFRELELKWYALPAVANMLLEVGGLEFPGCPFNGWYMGTEIGVRDFCDVQRYNILEEVGRRMGLETHKLASLWKDRAVIEINVAVLHSFQKQNVTIMDHHSAAESFMKYMQSEYRSRGGCPADWIWLVPPISGSITPVFHQEMLNYVLSPFYYYQVEAWKTHVWQDEKRRPQRRKIQLKVLVKAVLFASMLMRKTMASRVRVTILFATETGKSETLARDLGALFSCAFHPKVLCMDEYKLSHLEEEQLLLVVTSTFGNGDSPGNGEKLKKSLFMLKELTNKFRYAVFGLGSSMYPQFCAFAHDIDHKLSHLGASQLTPGGEGDELNGKEEAFRCWAVQTFKAACDTSDVRGKHCIQIPRLYTSNVTWDPHHYRLLQDSQPLDLNKALSKMHAKNVFTLRLKSQRNLQSPISNRTTLQVELSCEDSQELSYLPGEHLGVFPGNQLALVQGILERVVYSPAPLQPVHLETLSERGSYWVRNNRLPPCSLSQALTYFLDITTPPTHLLLRKLAQLAHQYAERHRLEILCHPSEYNKWKLTNSPTFLEVLEEFPSLRVSAGFLLSQLPILKPRYYSISSSRDCTPMEVHLTVAVLVYPTRDGQGPLHHGVCSTWLSNLKPQDPVPCFVRSAGNFKLPEDPSRPCILIGPGTGIAPFRSFWQQRLHDIKHKGLRGSRMTLVFGCRRPDEDHLYREEMLEMAQSGVLHEVHTAYSRLPGQPKVYVQDILRQQLASQVLRMLHEEQGHLYVCGDVRMARDVAHTLKHLVAAKLSLSEEQVEDYFFQLKSQKRYHEDIFGAVFPYEVKKDGAAKQPSDPRVPAAHGRS.

Residues 22–58 (KDINNNVEKPPGATPSPSTQDDLKNHKHHNDSPQPLT) form a disordered region. Positions 23 to 27 (DINNN) match the DINNN-motif; mediates interaction with SPSB1, SPSB2 and SPSB4 motif. 2 residues coordinate Zn(2+): Cys-107 and Cys-112. Cys-197 is a heme b binding site. 4 residues coordinate L-arginine: Gln-260, Trp-369, Tyr-370, and Glu-374. (6R)-L-erythro-5,6,7,8-tetrahydrobiopterin is bound by residues Arg-378, Ile-459, Trp-460, and Phe-473. Heme b is bound at residue Tyr-488. Positions 512–532 (LKVLVKAVLFASMLMRKTMAS) are calmodulin-binding. A Flavodoxin-like domain is found at 536–674 (VTILFATETG…AFRCWAVQTF (139 aa)). Residues Thr-542, Glu-543, Thr-544, Lys-546, and Ser-547 each coordinate FMN. Position 572 is a phosphotyrosine (Tyr-572). Residues Ser-588, Thr-589, Ser-625, Cys-632, and Glu-658 each coordinate FMN. The 241-residue stretch at 727-967 (KNVFTLRLKS…VRSAGNFKLP (241 aa)) folds into the FAD-binding FR-type domain. Arg-747 serves as a coordination point for NADP(+). Residues His-769, Arg-903, Tyr-905, Ser-906, Thr-921, Ala-923, Tyr-927, Val-940, Cys-941, and Ser-942 each contribute to the FAD site. NADP(+) is bound by residues Thr-981, Arg-1014, Ser-1043, Arg-1044, Lys-1050, Tyr-1052, Gln-1054, and Asp-1087.

It belongs to the NOS family. In terms of assembly, homodimer. Interacts with NHERF1. Interacts with GAPDH; induced by oxidatively-modified low-densitity lipoprotein (LDL(ox)). Interacts with S100A8 and S100A9 to form the iNOS-S100A8/9 transnitrosylase complex. Interacts with SPSB1, SPSB2 and SPSB4. Interacts with ELOC and CUL5 in the presence of SPSB1 or SPSB2 or SPSB4. Forms a complex with ASL, ASS1 and HSP90AA1; the complex regulates cell-autonomous L-arginine synthesis and citrulline recycling while channeling extracellular L-arginine to nitric oxide synthesis pathway. Heme b is required as a cofactor. The cofactor is FAD. It depends on FMN as a cofactor. (6R)-L-erythro-5,6,7,8-tetrahydrobiopterin serves as cofactor. Polyubiquitinated; mediated by SPSB1, SPSB2 and SPSB4, leading to proteasomal degradation.

The protein localises to the cytoplasm. It localises to the cytosol. It carries out the reaction 2 L-arginine + 3 NADPH + 4 O2 + H(+) = 2 L-citrulline + 2 nitric oxide + 3 NADP(+) + 4 H2O. Its activity is regulated as follows. Regulated by calcium/calmodulin. Its function is as follows. Produces nitric oxide (NO) which is a messenger molecule with diverse functions throughout the body. In macrophages, NO mediates tumoricidal and bactericidal actions. Also has nitrosylase activity and mediates cysteine S-nitrosylation of cytoplasmic target proteins such PTGS2/COX2. As component of the iNOS-S100A8/9 transnitrosylase complex involved in the selective inflammatory stimulus-dependent S-nitrosylation of GAPDH implicated in regulation of the GAIT complex activity and probably multiple targets including ANXA5, EZR, MSN and VIM. Involved in inflammation, enhances the synthesis of pro-inflammatory mediators such as IL6 and IL8. The chain is Nitric oxide synthase, inducible (NOS2) from Canis lupus familiaris (Dog).